Here is a 386-residue protein sequence, read N- to C-terminus: 5-hydroxytryptamine receptor 1B (386 aa).

The Extracellular segment spans residues 1 to 42 (MEEQGIQCAPPPPAASQTGVPLVNLSHNCSAESHIYQDSIAL). 2 N-linked (GlcNAc...) asparagine glycosylation sites follow: Asn24 and Asn28. Residues 43 to 68 (PWKVLLVALLALITLATTLSNAFVIA) form a helical membrane-spanning segment. Topologically, residues 69-82 (TVYRTRKLHTPANY) are cytoplasmic. A helical transmembrane segment spans residues 83-107 (LIASLAVTDLLVSILVMPVSTMYTV). Over 108–115 (TGRWTLGQ) the chain is Extracellular. The chain crosses the membrane as a helical span at residues 116-141 (VVCDFWLSSDITCCTASIMHLCVIAL). Cys118 and Cys195 form a disulfide bridge. Ergotamine is bound by residues Asp125 and Thr130. Positions 142 to 144 (DRY) match the DRY motif; important for ligand-induced conformation changes and signaling motif. Residues 142–161 (DRYWAITDAVEYAAKRTPKR) are Cytoplasmic-facing. A helical membrane pass occupies residues 162 to 180 (AAIMIALVWVFSISISLPP). The Extracellular portion of the chain corresponds to 181-201 (FFWRQAKAEEEVLTCLVNTDH). Residue Val197 participates in ergotamine binding. Residues 202–225 (VLYTVYSTGGAFYLPTLLLIALYG) traverse the membrane as a helical segment. The Cytoplasmic segment spans residues 226–311 (RIYVEARSRI…AARERKATKT (86 aa)). Residues 255–268 (DSPGSTTSVTSINS) are compositionally biased toward polar residues. Positions 255-278 (DSPGSTTSVTSINSRAPDLPSESG) are disordered. Residues 312-333 (LGIILGAFIVCWLPFFIISLVM) traverse the membrane as a helical segment. Residues 334-343 (PICKDACWFH) lie on the Extracellular side of the membrane. The helical transmembrane segment at 344 to 366 (MATLDFFNWLGYLNSLINPIIYT) threads the bilayer. The short motif at 361 to 365 (NPIIY) is the NPxxY motif; important for ligand-induced conformation changes and signaling element. Residues 367 to 386 (MSNEDFKQAFHKLIRFKCAG) lie on the Cytoplasmic side of the membrane. Cys384 is lipidated: S-palmitoyl cysteine.

It belongs to the G-protein coupled receptor 1 family. In terms of assembly, homodimer. Heterodimer with HTR1D. Post-translationally, phosphorylated. Desensitization of the receptor may be mediated by its phosphorylation. Palmitoylated.

The protein resides in the cell membrane. Functionally, G-protein coupled receptor for 5-hydroxytryptamine (serotonin). Also functions as a receptor for ergot alkaloid derivatives, various anxiolytic and antidepressant drugs and other psychoactive substances, such as lysergic acid diethylamide (LSD). Ligand binding causes a conformation change that triggers signaling via guanine nucleotide-binding proteins (G proteins) and modulates the activity of downstream effectors, such as adenylate cyclase. HTR1B is coupled to G(i)/G(o) G alpha proteins and mediates inhibitory neurotransmission by inhibiting adenylate cyclase activity. Arrestin family members inhibit signaling via G proteins and mediate activation of alternative signaling pathways. Regulates the release of 5-hydroxytryptamine, dopamine and acetylcholine in the brain, and thereby affects neural activity, nociceptive processing, pain perception, mood and behavior. Besides, plays a role in vasoconstriction of cerebral arteries. This chain is 5-hydroxytryptamine receptor 1B (HTR1B), found in Cricetulus griseus (Chinese hamster).